The sequence spans 236 residues: Large ribosomal subunit protein uL1 (236 aa).

Belongs to the universal ribosomal protein uL1 family. As to quaternary structure, part of the 50S ribosomal subunit.

Its function is as follows. Binds directly to 23S rRNA. The L1 stalk is quite mobile in the ribosome, and is involved in E site tRNA release. Functionally, protein L1 is also a translational repressor protein, it controls the translation of the L11 operon by binding to its mRNA. This is Large ribosomal subunit protein uL1 from Protochlamydia amoebophila (strain UWE25).